Reading from the N-terminus, the 199-residue chain is MTSINSFPRNIDWPSNIGIKKIEGTNPTVNAIKGLLYNGGSIYAFLYFVIAMFVEPTLQKQYQQRNDFSLFVLLRLRRIIAQLQKRLVMTPVSSLGFNEQNNFVERSTQTSDDNIIREDNSHWAEMIYQLQNMKQELQYFNRSSGQPSESIDDFVFQIKMVTDQVELTDRSRAFSNKSRNIIQGIREIKGWFVNGQVPR.

It localises to the peroxisome membrane. Its function is as follows. Component of the peroxisomal translocation machinery with PEX13 and PEX14. Interacts indirectly with the PTS1 receptor (PAS10/PEX5) and directly binds to PEX14. Required for import of both PTS1 and PTS2 proteins. In Saccharomyces cerevisiae (strain ATCC 204508 / S288c) (Baker's yeast), this protein is Peroxisomal membrane protein PEX17 (PEX17).